Reading from the N-terminus, the 240-residue chain is Octanoyltransferase (240 aa).

A disordered region spans residues 1–22; sequence MGTTGTNDGATTPPANTSTPAV. Residues 10-21 are compositionally biased toward low complexity; the sequence is ATTPPANTSTPA. The 186-residue stretch at 51 to 236 folds into the BPL/LPL catalytic domain; it reads EKIPDTILLL…NLVDALNGDL (186 aa). Substrate is bound by residues 89–96, 166–168, and 179–181; these read RGGRITWH, AIG, and GVA. C197 (acyl-thioester intermediate) is an active-site residue.

It belongs to the LipB family.

Its subcellular location is the cytoplasm. It catalyses the reaction octanoyl-[ACP] + L-lysyl-[protein] = N(6)-octanoyl-L-lysyl-[protein] + holo-[ACP] + H(+). The protein operates within protein modification; protein lipoylation via endogenous pathway; protein N(6)-(lipoyl)lysine from octanoyl-[acyl-carrier-protein]: step 1/2. Catalyzes the transfer of endogenously produced octanoic acid from octanoyl-acyl-carrier-protein onto the lipoyl domains of lipoate-dependent enzymes. Lipoyl-ACP can also act as a substrate although octanoyl-ACP is likely to be the physiological substrate. This chain is Octanoyltransferase, found in Corynebacterium jeikeium (strain K411).